The following is a 309-amino-acid chain: Putative lipid kinase YtlR (309 aa).

The region spanning 1 to 134 is the DAGKc domain; that stretch reads MSHWFFIINP…FHLGSVNFLQ (134 aa). ATP-binding positions include 9-13, Thr40, and 69-75; these read NPTAG and GDGTMHE. Mg(2+) is bound by residues Asn229, Glu232, and Thr234. The Proton acceptor role is filled by Glu289.

Belongs to the diacylglycerol/lipid kinase family. Mg(2+) serves as cofactor.

May catalyze the ATP-dependent phosphorylation of lipids other than diacylglycerol (DAG). In fact, is not able to exhibit diacylglycerol kinase activity in vitro. The polypeptide is Putative lipid kinase YtlR (ytlR) (Bacillus subtilis (strain 168)).